We begin with the raw amino-acid sequence, 153 residues long: Protein E6 (153 aa).

Zinc fingers lie at residues 33–69 (CVYC…CNFC) and 106–142 (CYRC…CLQC). Residues 151-153 (TAV) carry the PDZ-binding domain motif.

This sequence belongs to the papillomaviridae E6 protein family. In terms of assembly, forms homodimers. Interacts with ubiquitin-protein ligase UBE3A/E6-AP and thus forms a complex with human TP53. Interacts with human NFX1 and MAGI3. Interacts with human IRF3; this interaction inhibits the establishment of antiviral state. Interacts with human TYK2; this interaction inhibits JAK-STAT activation by interferon alpha. Interacts with host DLG1; this interaction leads to the proteasomal degradation of DLG1.

It is found in the host cytoplasm. The protein resides in the host nucleus. In terms of biological role, plays a major role in the induction and maintenance of cellular transformation. Acts mainly as an oncoprotein by stimulating the destruction of many host cell key regulatory proteins. E6 associates with host UBE3A/E6-AP ubiquitin-protein ligase, and inactivates tumor suppressors TP53 and TP73 by targeting them to the 26S proteasome for degradation. In turn, DNA damage and chromosomal instabilities increase and lead to cell proliferation and cancer development. The complex E6/E6AP targets several other substrates to degradation via the proteasome including host DLG1 or NFX1, a repressor of human telomerase reverse transcriptase (hTERT). The resulting increased expression of hTERT prevents the shortening of telomere length leading to cell immortalization. Other cellular targets including BAK1, Fas-associated death domain-containing protein (FADD) and procaspase 8, are degraded by E6/E6AP causing inhibition of apoptosis. E6 also inhibits immune response by interacting with host IRF3 and TYK2. These interactions prevent IRF3 transcriptional activities and inhibit TYK2-mediated JAK-STAT activation by interferon alpha resulting in inhibition of the interferon signaling pathway. In Homo sapiens (Human), this protein is Protein E6.